The sequence spans 198 residues: Holliday junction branch migration complex subunit RuvA (198 aa).

Residues 1–61 form a domain I region; sequence MILYRIGEII…EYQYATYAFK (61 aa). Residues 62–139 are domain II; that stretch reads DFKERLLFVD…KMISPKDAAK (78 aa). A flexible linker region spans residues 140–144; sequence INETT. The tract at residues 144-198 is domain III; the sequence is TNTLSEVKETLKMVGFKTKQIDGALSKISSTDDVEKMIEEAIKLMSTQNYESATA.

This sequence belongs to the RuvA family. Homotetramer. Forms an RuvA(8)-RuvB(12)-Holliday junction (HJ) complex. HJ DNA is sandwiched between 2 RuvA tetramers; dsDNA enters through RuvA and exits via RuvB. An RuvB hexamer assembles on each DNA strand where it exits the tetramer. Each RuvB hexamer is contacted by two RuvA subunits (via domain III) on 2 adjacent RuvB subunits; this complex drives branch migration. In the full resolvosome a probable DNA-RuvA(4)-RuvB(12)-RuvC(2) complex forms which resolves the HJ.

It localises to the cytoplasm. Its function is as follows. The RuvA-RuvB-RuvC complex processes Holliday junction (HJ) DNA during genetic recombination and DNA repair, while the RuvA-RuvB complex plays an important role in the rescue of blocked DNA replication forks via replication fork reversal (RFR). RuvA specifically binds to HJ cruciform DNA, conferring on it an open structure. The RuvB hexamer acts as an ATP-dependent pump, pulling dsDNA into and through the RuvAB complex. HJ branch migration allows RuvC to scan DNA until it finds its consensus sequence, where it cleaves and resolves the cruciform DNA. The sequence is that of Holliday junction branch migration complex subunit RuvA from Mycoplasmopsis agalactiae (strain NCTC 10123 / CIP 59.7 / PG2) (Mycoplasma agalactiae).